The chain runs to 444 residues: MQVTETLKEGLKRAYTITVTAAELDAKVQEKLVEAQPDIEMKGFRKGKVPLAMLRKQFGPRLLGDAMQDAIDGAMRDHLETSGDRPAMQPEVRMVDGETWQEGTDVVVEMKYEALPEIPEIETSKVTLERLVVKADEAAVDEALKNLAESAQNFDDRRKGSKAKDGDQIVIDFKGSVDGELFEGGSAEDYPLVLGSGSFIPGFEEQLVGAKVEDEVTVKVTFPTEYGAKHLAGKEAEFACTVKAVKAPKPAEIDDELAKKYGAEDLAALKAQIAERLEAEYKGASRAVLKRALLDQLDTMVSFELPSKLVEAEAHQIAHQLWHEEHPEEHGHNHGTIEPTDEHKALAERRVRLGLLLAEIGRKAEVTVTDAEMTQAVLAQARQYPGQERAYFEFVQKNPQIQQQLRAPIFEDKVVDLILEGATVTEKEVGKDDLQKAIEALDEM.

Residues 166–251 enclose the PPIase FKBP-type domain; it reads GDQIVIDFKG…VKAVKAPKPA (86 aa).

Belongs to the FKBP-type PPIase family. Tig subfamily.

It is found in the cytoplasm. It carries out the reaction [protein]-peptidylproline (omega=180) = [protein]-peptidylproline (omega=0). Functionally, involved in protein export. Acts as a chaperone by maintaining the newly synthesized protein in an open conformation. Functions as a peptidyl-prolyl cis-trans isomerase. This Cereibacter sphaeroides (strain ATCC 17025 / ATH 2.4.3) (Rhodobacter sphaeroides) protein is Trigger factor.